Reading from the N-terminus, the 254-residue chain is Putative epimerase LsrE (254 aa).

A helical transmembrane segment spans residues 14–34 (VALLASYPLSVGILAGQWIAL). A divalent metal cation-binding residues include His-50, Asp-52, and His-81. Asp-52 acts as the Proton acceptor in catalysis. Substrate contacts are provided by residues His-81, 166-169 (GYGS), 199-201 (DGS), and 221-222 (GS). Asp-199 serves as a coordination point for a divalent metal cation. The active-site Proton donor is the Asp-199.

It belongs to the ribulose-phosphate 3-epimerase family. A divalent metal cation serves as cofactor.

It localises to the cell membrane. The protein is Putative epimerase LsrE (lsrE) of Salmonella paratyphi A (strain ATCC 9150 / SARB42).